Consider the following 411-residue polypeptide: Dual-specificity RNA methyltransferase RlmN (411 aa).

E124 acts as the Proton acceptor in catalysis. The region spanning 130-379 is the Radical SAM core domain; sequence EEGRGTLCIS…IRTPRGRDIL (250 aa). Cysteines 137 and 382 form a disulfide. C144, C148, and C151 together coordinate [4Fe-4S] cluster. Residues 208–209, S240, 262–264, and N339 each bind S-adenosyl-L-methionine; these read GE and SLH. The active-site S-methylcysteine intermediate is C382.

This sequence belongs to the radical SAM superfamily. RlmN family. Requires [4Fe-4S] cluster as cofactor.

The protein resides in the cytoplasm. It catalyses the reaction adenosine(2503) in 23S rRNA + 2 reduced [2Fe-2S]-[ferredoxin] + 2 S-adenosyl-L-methionine = 2-methyladenosine(2503) in 23S rRNA + 5'-deoxyadenosine + L-methionine + 2 oxidized [2Fe-2S]-[ferredoxin] + S-adenosyl-L-homocysteine. It carries out the reaction adenosine(37) in tRNA + 2 reduced [2Fe-2S]-[ferredoxin] + 2 S-adenosyl-L-methionine = 2-methyladenosine(37) in tRNA + 5'-deoxyadenosine + L-methionine + 2 oxidized [2Fe-2S]-[ferredoxin] + S-adenosyl-L-homocysteine. Specifically methylates position 2 of adenine 2503 in 23S rRNA and position 2 of adenine 37 in tRNAs. m2A2503 modification seems to play a crucial role in the proofreading step occurring at the peptidyl transferase center and thus would serve to optimize ribosomal fidelity. In Sinorhizobium fredii (strain NBRC 101917 / NGR234), this protein is Dual-specificity RNA methyltransferase RlmN.